The primary structure comprises 134 residues: Small ribosomal subunit protein uS12 (134 aa).

A 3-methylthioaspartic acid modification is found at Asp89. The disordered stretch occupies residues 101–134 (TLDASGVNGRNQSRSKYGTKRPKPGQAAAGGKKK). A compositionally biased stretch (low complexity) spans 125 to 134 (GQAAAGGKKK).

The protein belongs to the universal ribosomal protein uS12 family. Part of the 30S ribosomal subunit. Contacts proteins S8 and S17. May interact with IF1 in the 30S initiation complex.

With S4 and S5 plays an important role in translational accuracy. Functionally, interacts with and stabilizes bases of the 16S rRNA that are involved in tRNA selection in the A site and with the mRNA backbone. Located at the interface of the 30S and 50S subunits, it traverses the body of the 30S subunit contacting proteins on the other side and probably holding the rRNA structure together. The combined cluster of proteins S8, S12 and S17 appears to hold together the shoulder and platform of the 30S subunit. This is Small ribosomal subunit protein uS12 from Gemmatimonas aurantiaca (strain DSM 14586 / JCM 11422 / NBRC 100505 / T-27).